The primary structure comprises 890 residues: MKILKSLVLLVLFMAMPAKADDAFSWMSTSFGGLKSLFGCLEVPEFTSFKEGNIGISLSTAGTWQSTGNSVEKGKLLKINWSTSGITPEPRKYLVLYRIDPRFSTPQVFIKTYNYSKLQFEALGFPRFVTDNNSATPGAIPPDKDLDALSFTKMSDSVKYFNYSNGNSRIEVKAGDVVNISLVGKDNFFSPNTLDNILTQELDSSIFAASALYTQSNLGNFDNRIIYSSAKEVCDLIDASRDPDKPSGCSGTGSATKYKSINSNEALVGKPMITRAVQNFMGLINSCPANAGINTSPACYYDQGRGMIIKVGGQVIKERDQSFVNSGSTQSSFIYYQATSGGTMDFTSDWQVNNMFSNSVLMSDWSRNFSNYANFVDYINKNDWSANFLYFGRYSMIVEIGNGANSINPGDQQNISLEYLITSDGTLPDPSVRGTPVDYNFAADAPQDGYLWLRVVNPNSNIQGVVSVNYANYTGTTWFSDIIYNGAIKPITDQFRTFSQNFYIKLVKNSAVQNIAKAALTLYVTIFGLMFVAGALKLTAVEVITRICKIAIVAFLIREESWSFFNTYFFSAFTNGIDFFVTNVVGATSSRANIFGFIDPIFDKYTNGRIWGLLFIELLQIHNGLAFIAIITIYSLITYFRAILEVIIGYVIAFIGLTVMISLAPFFIILMLFEKTKSLFDNWISTLLSYVVQPTILLIFFLLIDQVLSEQLLKVVVRACWDTLIPIKIGLDLTNLGIPINFSFTLPFLPGIPFYVPDVPEISSSNILTNKANTFLVLFTTALLFYSYCLMSYGLVTFVNIVVGMLTNVTPARISGNYQERSDPVGAVMQDIGSVTKPIKKAAMAPARVFKDKIIDQNYKARKPEGGEHTNKFLAERNDVPKKEEGERKE.

The first 20 residues, 1–20 (MKILKSLVLLVLFMAMPAKA), serve as a signal peptide directing secretion. The next 6 helical transmembrane spans lie at 518–538 (AALT…ALKL), 567–587 (TYFF…VVGA), 613–633 (LLFI…IITI), 651–671 (VIAF…IILM), 684–704 (ISTL…FLLI), and 775–795 (FLVL…SYGL). The disordered stretch occupies residues 860–890 (KARKPEGGEHTNKFLAERNDVPKKEEGERKE). The span at 862–890 (RKPEGGEHTNKFLAERNDVPKKEEGERKE) shows a compositional bias: basic and acidic residues.

This sequence belongs to the TrbL/VirB6 family.

It localises to the cell membrane. This is an uncharacterized protein from Rickettsia felis (strain ATCC VR-1525 / URRWXCal2) (Rickettsia azadi).